Reading from the N-terminus, the 275-residue chain is Pyridoxal phosphate homeostasis protein (275 aa).

A Phosphoserine modification is found at S6. K47 bears the N6-(pyridoxal phosphate)lysine mark. Y69 is modified (phosphotyrosine). N6-succinyllysine is present on K125. A phosphoserine mark is found at S226 and S244. Basic and acidic residues predominate over residues 251–263 (DYSKKPTPDKCAA). A disordered region spans residues 251–275 (DYSKKPTPDKCAADVKAPLEVAQEH).

The protein belongs to the pyridoxal phosphate-binding protein YggS/PROSC family. Ubiquitous.

Pyridoxal 5'-phosphate (PLP)-binding protein, which may be involved in intracellular homeostatic regulation of pyridoxal 5'-phosphate (PLP), the active form of vitamin B6. This is Pyridoxal phosphate homeostasis protein from Homo sapiens (Human).